We begin with the raw amino-acid sequence, 423 residues long: Serine hydroxymethyltransferase (423 aa).

Residues Leu125 and Gly129 to Leu131 each bind (6S)-5,6,7,8-tetrahydrofolate. An N6-(pyridoxal phosphate)lysine modification is found at Lys234. Position 249 (Glu249) interacts with (6S)-5,6,7,8-tetrahydrofolate.

It belongs to the SHMT family. Homodimer. It depends on pyridoxal 5'-phosphate as a cofactor.

It is found in the cytoplasm. It catalyses the reaction (6R)-5,10-methylene-5,6,7,8-tetrahydrofolate + glycine + H2O = (6S)-5,6,7,8-tetrahydrofolate + L-serine. The protein operates within one-carbon metabolism; tetrahydrofolate interconversion. It participates in amino-acid biosynthesis; glycine biosynthesis; glycine from L-serine: step 1/1. Its function is as follows. Catalyzes the reversible interconversion of serine and glycine with tetrahydrofolate (THF) serving as the one-carbon carrier. This reaction serves as the major source of one-carbon groups required for the biosynthesis of purines, thymidylate, methionine, and other important biomolecules. Also exhibits THF-independent aldolase activity toward beta-hydroxyamino acids, producing glycine and aldehydes, via a retro-aldol mechanism. The polypeptide is Serine hydroxymethyltransferase (Thermobifida fusca (strain YX)).